The primary structure comprises 305 residues: Glycine--tRNA ligase alpha subunit (305 aa).

This sequence belongs to the class-II aminoacyl-tRNA synthetase family. Tetramer of two alpha and two beta subunits.

The protein resides in the cytoplasm. The catalysed reaction is tRNA(Gly) + glycine + ATP = glycyl-tRNA(Gly) + AMP + diphosphate. This Streptococcus pyogenes serotype M18 (strain MGAS8232) protein is Glycine--tRNA ligase alpha subunit.